Here is a 504-residue protein sequence, read N- to C-terminus: Maturase K (504 aa).

Belongs to the intron maturase 2 family. MatK subfamily.

The protein resides in the plastid. The protein localises to the chloroplast. Its function is as follows. Usually encoded in the trnK tRNA gene intron. Probably assists in splicing its own and other chloroplast group II introns. In Quercus coccifera (Kermes oak), this protein is Maturase K.